We begin with the raw amino-acid sequence, 179 residues long: Phospholipase A2 (179 aa).

An N-terminal signal peptide occupies residues 1–21 (MHALRSSVLALWLCLHVSVRA). Positions 22–39 (WMTYRSANGLDEYEPEDR) are excised as a propeptide. W47, G49, and G51 together coordinate Ca(2+). 5 cysteine pairs are disulfide-bonded: C48–C70, C69–C109, C76–C102, C100–C133, and C142–C150. H73 is a catalytic residue. D74 contributes to the Ca(2+) binding site. D103 is an active-site residue. N112 carries an N-linked (GlcNAc...) asparagine glycan.

It depends on Ca(2+) as a cofactor. In terms of tissue distribution, expressed by the venom gland.

Its subcellular location is the secreted. It catalyses the reaction a 1,2-diacyl-sn-glycero-3-phosphocholine + H2O = a 1-acyl-sn-glycero-3-phosphocholine + a fatty acid + H(+). Its function is as follows. PLA2 catalyzes the calcium-dependent hydrolysis of the 2-acyl groups in 3-sn-phosphoglycerides. The protein is Phospholipase A2 of Xylocopa appendiculata circumvolans (Japanese carpenter bee).